A 513-amino-acid polypeptide reads, in one-letter code: MGTFHRLTTTAGLQTALGTFSPATTVGFVPTMGALHGGHAALIRRARQECDVVVVSIFVNPLQFGPQEDLERYPRALEADTALCQQLGVDLLFVPSVAELYPTGMKHLTVVEPPRELTEHLCGRSRPGHFRGVATIVLKLLHLVQPDRAYFGQKDAQQLAIIRRCVADLNLDVEIIGCPIVRDADGLALSSRNQYLSAEERATALALSQSLEVAQAAFRQGCWDASLLLAQVQDHLRQFPQLRLDYAELVHPQTLVPLERIETVGLLAIAGWVGQTRLIDNCLLDRRRPILAVDGPAGAGKSTVTRLAAQALGLRYLDTGAMYRAVTWWCLENNLDLHDEPAIVEAIAHCRLHLESPDPHQPTRVWINDREVSQAIRSLEVTQRVSQIAALRGVRRLMVQQQRAIGAHGGIAAEGRDIGTHVFPEAGLKIFLTASPEERAQRRWQELQQQGHCDLSYEELLAQITARDTADQQRPYAPFRKAADAIEVCTDNLGIDEVVSKIVHLYRSRFPQP.

The tract at residues M1–C282 is pantoate--beta-alanine ligase. An ATP-binding site is contributed by M32 to H39. The active-site Proton donor is the H39. Q63 contacts (R)-pantoate. A beta-alanine-binding site is contributed by Q63. An ATP-binding site is contributed by G152–D155. Residue Q158 coordinates (R)-pantoate. Residues V181 and L189–R192 each bind ATP. The cytidylate kinase stretch occupies residues L283–P513.

The protein in the N-terminal section; belongs to the pantothenate synthetase family. In the C-terminal section; belongs to the cytidylate kinase family. Type 1 subfamily.

Its subcellular location is the cytoplasm. It carries out the reaction (R)-pantoate + beta-alanine + ATP = (R)-pantothenate + AMP + diphosphate + H(+). The enzyme catalyses CMP + ATP = CDP + ADP. The catalysed reaction is dCMP + ATP = dCDP + ADP. Its pathway is cofactor biosynthesis; (R)-pantothenate biosynthesis; (R)-pantothenate from (R)-pantoate and beta-alanine: step 1/1. Functionally, catalyzes the condensation of pantoate with beta-alanine in an ATP-dependent reaction via a pantoyl-adenylate intermediate. In terms of biological role, catalyzes the transfer of a phosphate group from ATP to either CMP or dCMP to form CDP or dCDP and ADP, respectively. The protein is Bifunctional pantoate ligase/cytidylate kinase of Thermosynechococcus vestitus (strain NIES-2133 / IAM M-273 / BP-1).